A 1305-amino-acid polypeptide reads, in one-letter code: Junctional cadherin 5-associated protein (1305 aa).

7 disordered regions span residues 13 to 86, 120 to 151, 249 to 419, 450 to 545, 575 to 604, 616 to 795, and 818 to 1005; these read YKLS…PSTA, REQE…VGGR, GVPK…HTTA, KLDG…CEMQ, IPVK…EQSV, ALTG…SRQL, and FNKE…GLSA. Basic and acidic residues-rich tracts occupy residues 21–31, 69–82, 120–129, and 140–151; these read APHEDDGERRQ, PESR…HGER, REQEAREDPG, and HPREGPWEVGGR. The segment covering 337-358 has biased composition (pro residues); the sequence is GLEPPVYVPPPSYKSPPQPAAH. A compositionally biased stretch (basic and acidic residues) spans 360–369; the sequence is CPEEAVSRHE. Composition is skewed to polar residues over residues 530–545 and 579–594; these read LVSS…CEMQ and SESQ…NDLK. Positions 595-604 are enriched in low complexity; it reads QSASLQEQSV. A compositionally biased stretch (polar residues) spans 669 to 683; sequence QQTQTSFAHEPQSLQ. The segment covering 729–748 has biased composition (low complexity); the sequence is SPKSQGSLSPSSNSAFSGSS. Serine 841 is subject to Phosphoserine. 2 stretches are compositionally biased toward basic and acidic residues: residues 878–889 and 945–958; these read SKSESWSEEGRP and AKPE…EQRE. Phosphoserine occurs at positions 1004, 1010, 1152, and 1239. Disordered regions lie at residues 1062 to 1166 and 1234 to 1305; these read GAQR…DVET and SRAA…VERV. A compositionally biased stretch (basic and acidic residues) spans 1276–1288; that stretch reads ADGHPAARRENGG.

It is found in the cell junction. Its subcellular location is the adherens junction. The sequence is that of Junctional cadherin 5-associated protein (JCAD) from Bos taurus (Bovine).